The chain runs to 201 residues: MDKFNKLTGVAAPLPIINVDTDMIIPKQFLKTIKRTGLGKNLFDEMRYDDNGNEIPDFVLNKPAYRNAQILVTGENFGCGSSREHAPWALLDFGIRCVIAPSFADIFYNNCFQNGILPIVLPQEEVDKLMDDAERGSNAIITVDLEAQEIRGPDGGVIKFDVDPFRKHCMLNGLDGVGLTLQKEAEIATFEKKLEETQPWL.

It belongs to the LeuD family. LeuD type 1 subfamily. Heterodimer of LeuC and LeuD.

The catalysed reaction is (2R,3S)-3-isopropylmalate = (2S)-2-isopropylmalate. It participates in amino-acid biosynthesis; L-leucine biosynthesis; L-leucine from 3-methyl-2-oxobutanoate: step 2/4. Its function is as follows. Catalyzes the isomerization between 2-isopropylmalate and 3-isopropylmalate, via the formation of 2-isopropylmaleate. The chain is 3-isopropylmalate dehydratase small subunit from Parvibaculum lavamentivorans (strain DS-1 / DSM 13023 / NCIMB 13966).